Reading from the N-terminus, the 718-residue chain is Protein Smaug homolog 1 (718 aa).

Ser-168 carries the post-translational modification Phosphoserine. Disordered stretches follow at residues 278 to 323 (ARGP…EEGS), 416 to 474 (KAYS…LQPH), and 572 to 601 (NRGF…QYQI). Positions 323 to 391 (SGMKDVPAWL…ERQNLLKSLE (69 aa)) constitute an SAM domain. Ser-420 is modified (phosphoserine). Residue Thr-424 is modified to Phosphothreonine. The segment covering 453–466 (GAAATGATATPSAG) has biased composition (low complexity). Omega-N-methylarginine is present on Arg-573. Ser-580 carries the post-translational modification Phosphoserine.

The protein belongs to the SMAUG family.

It is found in the cytoplasm. The protein localises to the cell projection. It localises to the dendrite. Its subcellular location is the synapse. The protein resides in the synaptosome. Acts as a translational repressor of SRE-containing messengers. The polypeptide is Protein Smaug homolog 1 (SAMD4A) (Homo sapiens (Human)).